A 441-amino-acid polypeptide reads, in one-letter code: Histidinol dehydrogenase (441 aa).

Residues tyrosine 136, glutamine 197, and asparagine 220 each contribute to the NAD(+) site. Substrate is bound by residues serine 243, glutamine 265, and histidine 268. The Zn(2+) site is built by glutamine 265 and histidine 268. Active-site proton acceptor residues include glutamate 333 and histidine 334. Residues histidine 334, aspartate 367, glutamate 421, and histidine 426 each coordinate substrate. A Zn(2+)-binding site is contributed by aspartate 367. Histidine 426 contributes to the Zn(2+) binding site.

The protein belongs to the histidinol dehydrogenase family. Zn(2+) is required as a cofactor.

It catalyses the reaction L-histidinol + 2 NAD(+) + H2O = L-histidine + 2 NADH + 3 H(+). Its pathway is amino-acid biosynthesis; L-histidine biosynthesis; L-histidine from 5-phospho-alpha-D-ribose 1-diphosphate: step 9/9. Catalyzes the sequential NAD-dependent oxidations of L-histidinol to L-histidinaldehyde and then to L-histidine. The protein is Histidinol dehydrogenase of Pseudomonas fluorescens (strain Pf0-1).